We begin with the raw amino-acid sequence, 844 residues long: DNA mismatch repair protein MutS (844 aa).

610–617 (GPNMGGKS) is an ATP binding site.

This sequence belongs to the DNA mismatch repair MutS family.

In terms of biological role, this protein is involved in the repair of mismatches in DNA. It is possible that it carries out the mismatch recognition step. This protein has a weak ATPase activity. In Francisella tularensis subsp. mediasiatica (strain FSC147), this protein is DNA mismatch repair protein MutS.